The following is a 713-amino-acid chain: KNR4/SMI1 homolog (713 aa).

Disordered stretches follow at residues 18–129, 255–274, 400–457, and 500–713; these read PDRY…VTRD, IFINPNAGSPNSSTPGSPVA, RHQM…SKPA, and EPLE…KGKK. Residues 22-34 are compositionally biased toward low complexity; it reads ASQQRSSKASQSA. Polar residues predominate over residues 35–65; sequence GANSQNRPLYNNDDNQSEMYQASSSYTGGYT. 2 stretches are compositionally biased toward low complexity: residues 66-81 and 88-103; these read NSPSASSSNLAGGAAA and SSRNNSTTNFSASSTS. Positions 260–270 are enriched in polar residues; sequence NAGSPNSSTPG. Positions 400–412 are enriched in basic and acidic residues; that stretch reads RHQMQRREHERRQ. The span at 413–429 shows a compositional bias: low complexity; it reads AAAAAQQQQQQQQHHAQ. Composition is skewed to basic and acidic residues over residues 507–605 and 613–662; these read EIKG…EEQK and AKAE…KIDE. Positions 663–686 are enriched in acidic residues; sequence ENGNAEEADEEADDDDEDDEEEGD. The span at 701–713 shows a compositional bias: basic residues; the sequence is SKSKKKNKKKGKK.

It belongs to the KNR4/SMI1 family.

This Yarrowia lipolytica (strain CLIB 122 / E 150) (Yeast) protein is KNR4/SMI1 homolog.